Here is a 652-residue protein sequence, read N- to C-terminus: Phosphatidylinositol-binding clathrin assembly protein (652 aa).

Ser-2 is modified (N-acetylserine). Residues 14–145 (QHSVTGSAVS…VSYRQVAFDF (132 aa)) enclose the ENTH domain. 2 positions are modified to phosphoserine: Ser-16 and Ser-20. The tract at residues 221-294 (KYFDMKKNQC…LEGKKIKDST (74 aa)) is interaction with PIMREG. A Glycyl lysine isopeptide (Lys-Gly) (interchain with G-Cter in SUMO2) cross-link involves residue Lys-238. Phosphoserine occurs at positions 303 and 315. Residues 559 to 580 (KNDVNWSQPGEKKLTGGSNWQP) form a disordered region.

This sequence belongs to the PICALM/SNAP91 family. As to quaternary structure, binds to clathrin; involves primarily the C-terminal sequences, but the full-length protein is required for full binding capacity. Binds phosphatidylinositol 4,5- bisphosphate. Interacts with PIMREG; this interaction may change the subcellular location into the nucleus. Interacts with AP2A1 (via its alpha-appendage domain). Interacts (via N-terminus) with VAMP2; VAMP3; VAMP7 and VAMP8 (Via N-terminus). Interacts with LC3/MAP1LC3A. As to expression, expressed in all tissues examined.

Its subcellular location is the cell membrane. It is found in the membrane. The protein localises to the clathrin-coated pit. It localises to the golgi apparatus. The protein resides in the cytoplasmic vesicle. Its subcellular location is the clathrin-coated vesicle. It is found in the nucleus. Cytoplasmic adapter protein that plays a critical role in clathrin-mediated endocytosis which is important in processes such as internalization of cell receptors, synaptic transmission or removal of apoptotic cells. Recruits AP-2 and attaches clathrin triskelions to the cytoplasmic side of plasma membrane leading to clathrin-coated vesicles (CCVs) assembly. Furthermore, regulates clathrin-coated vesicle size and maturation by directly sensing and driving membrane curvature. In addition to binding to clathrin, mediates the endocytosis of small R-SNARES (Soluble NSF Attachment Protein REceptors) between plasma membranes and endosomes including VAMP2, VAMP3, VAMP4, VAMP7 or VAMP8. In turn, PICALM-dependent SNARE endocytosis is required for the formation and maturation of autophagic precursors. Modulates thereby autophagy and the turnover of autophagy substrates such as MAPT/TAU or amyloid precursor protein cleaved C-terminal fragment (APP-CTF). The protein is Phosphatidylinositol-binding clathrin assembly protein (PICALM) of Homo sapiens (Human).